A 637-amino-acid chain; its full sequence is Anthranilate synthase, phenazine specific (637 aa).

An anthranilate synthase component I region spans residues M1–S434. Residues Q437–V628 enclose the Glutamine amidotransferase type-1 domain. Catalysis depends on for GATase activity residues C517, H602, and E604.

The catalysed reaction is chorismate + L-glutamine = anthranilate + pyruvate + L-glutamate + H(+). It functions in the pathway antibiotic biosynthesis; phenazine biosynthesis. Functionally, involved in the biosynthesis of the antibiotic, phenazine, a nitrogen-containing heterocyclic molecule having important roles in virulence, competition and biological control. The sequence is that of Anthranilate synthase, phenazine specific (phzE) from Pseudomonas fluorescens.